The sequence spans 587 residues: Leucine-rich repeat-containing protein 63 (587 aa).

LRR repeat units follow at residues 251–274, 344–367, 368–390, 392–413, 414–436, 437–459, and 487–510; these read QSVI…IPPR, AFQL…ILCL, KNLQ…IQQL, FLRI…LFSL, SYLE…IQKL, RSLE…ILKL, and LTQI…IPVE.

The sequence is that of Leucine-rich repeat-containing protein 63 (LRRC63) from Homo sapiens (Human).